The following is a 352-amino-acid chain: Histidinol-phosphate aminotransferase (352 aa).

The residue at position 221 (Lys221) is an N6-(pyridoxal phosphate)lysine.

The protein belongs to the class-II pyridoxal-phosphate-dependent aminotransferase family. Histidinol-phosphate aminotransferase subfamily. In terms of assembly, homodimer. Requires pyridoxal 5'-phosphate as cofactor.

It carries out the reaction L-histidinol phosphate + 2-oxoglutarate = 3-(imidazol-4-yl)-2-oxopropyl phosphate + L-glutamate. It participates in amino-acid biosynthesis; L-histidine biosynthesis; L-histidine from 5-phospho-alpha-D-ribose 1-diphosphate: step 7/9. The sequence is that of Histidinol-phosphate aminotransferase from Staphylococcus aureus (strain Mu3 / ATCC 700698).